We begin with the raw amino-acid sequence, 753 residues long: MAP/microtubule affinity-regulating kinase 3 (753 aa).

The disordered stretch occupies residues 1 to 36 (MSTRTPLPTVNERDTENHTSHGDGRQEVTSRTSRSG). The span at 11–28 (NERDTENHTSHGDGRQEV) shows a compositional bias: basic and acidic residues. S42 bears the Phosphoserine mark. One can recognise a Protein kinase domain in the interval 56–307 (YRLLKTIGKG…LEQIMKDRWI (252 aa)). Residues 62 to 70 (IGKGNFAKV) and K85 contribute to the ATP site. D178 serves as the catalytic Proton acceptor. T211 carries the phosphothreonine; by LKB1 modification. The region spanning 326 to 365 (ISDQKRIDIMVGMGYSQEEIQESLSKMKYDEITATYLLLG) is the UBA domain. Phosphoserine is present on residues S368, S374, S376, S380, S383, L384, S400, R407, S419, and S469. A disordered region spans residues 370–600 (ELDASDSSSS…TPLSQTRSRG (231 aa)). Over residues 374 to 385 (SDSSSSSNLSLA) the composition is skewed to low complexity. The segment covering 391-400 (SDLNNSTGQS) has biased composition (polar residues). Composition is skewed to polar residues over residues 490–513 (STVP…CSER) and 521–548 (VIQN…SSAA). Phosphoserine is present on residues S540 and S543. Phosphothreonine is present on T549. Phosphothreonine; by PKC/PRKCZ is present on T564. 4 positions are modified to phosphoserine: S583, S598, S601, and S643. Positions 584 to 600 (PSLSHEATPLSQTRSRG) are enriched in polar residues. A disordered region spans residues 632-655 (NGRYEGSSRNVSAEQKDENKEAKP). Over residues 645-655 (EQKDENKEAKP) the composition is skewed to basic and acidic residues. One can recognise a KA1 domain in the interval 704-753 (DGHAENLVQWEMEVCKLPRLSLNGVRFKRISGTSIAFKNIASKIANELKL).

Belongs to the protein kinase superfamily. CAMK Ser/Thr protein kinase family. SNF1 subfamily. Interacts with MAPT/TAU. Interacts with DLG5 (via coiled-coil domain). Interacts with STK3/MST2 and STK4/MST1 in the presence of DLG5. Interacts with YWHAB, YWHAG, YWHAQ and YWHAZ. Interacts with PKP2 (via N-terminus). Interacts with CDC25C. Interacts with KSR1. In terms of processing, phosphorylated at Thr-211 by STK11/LKB1 in complex with STE20-related adapter-alpha (STRADA) pseudo kinase and CAB39. Phosphorylation at Thr-564 by PRKCZ/aPKC inhibits the kinase activity. As to expression, ubiquitous.

It localises to the cell membrane. The protein resides in the cell projection. Its subcellular location is the dendrite. It is found in the cytoplasm. The catalysed reaction is L-seryl-[protein] + ATP = O-phospho-L-seryl-[protein] + ADP + H(+). It catalyses the reaction L-threonyl-[protein] + ATP = O-phospho-L-threonyl-[protein] + ADP + H(+). Its activity is regulated as follows. Activated by phosphorylation on Thr-211. Inhibited by phosphorylation on Thr-564. Its function is as follows. Serine/threonine-protein kinase. Involved in the specific phosphorylation of microtubule-associated proteins for MAP2 and MAP4. Phosphorylates the microtubule-associated protein MAPT/TAU. Phosphorylates CDC25C on 'Ser-216'. Regulates localization and activity of some histone deacetylases by mediating phosphorylation of HDAC7, promoting subsequent interaction between HDAC7 and 14-3-3 and export from the nucleus. Regulates localization and activity of MITF by mediating its phosphorylation, promoting subsequent interaction between MITF and 14-3-3 and retention in the cytosol. Negatively regulates the Hippo signaling pathway and antagonizes the phosphorylation of LATS1. Cooperates with DLG5 to inhibit the kinase activity of STK3/MST2 toward LATS1. Phosphorylates PKP2 and KSR1. The chain is MAP/microtubule affinity-regulating kinase 3 (MARK3) from Homo sapiens (Human).